The sequence spans 184 residues: Photosystem I assembly protein Ycf4 (184 aa).

2 helical membrane passes run 19–39 (ISNL…FLVG) and 57–77 (IIFF…LFIS).

The protein belongs to the Ycf4 family.

The protein localises to the plastid thylakoid membrane. Seems to be required for the assembly of the photosystem I complex. This Cuscuta exaltata (Tall dodder) protein is Photosystem I assembly protein Ycf4.